We begin with the raw amino-acid sequence, 130 residues long: Arginine decarboxylase proenzyme (130 aa).

S78 serves as the catalytic Schiff-base intermediate with substrate; via pyruvic acid. S78 carries the post-translational modification Pyruvic acid (Ser); by autocatalysis. Residue H83 is the Proton acceptor; for processing activity of the active site. C98 (proton donor; for catalytic activity) is an active-site residue.

It belongs to the prokaryotic AdoMetDC family. Type 1 subfamily. Heterooctamer of four alpha and four beta chains arranged as a tetramer of alpha/beta heterodimers. It depends on pyruvate as a cofactor. Post-translationally, is synthesized initially as an inactive proenzyme. Formation of the active enzyme involves a self-maturation process in which the active site pyruvoyl group is generated from an internal serine residue via an autocatalytic post-translational modification. Two non-identical subunits are generated from the proenzyme in this reaction, and the pyruvate is formed at the N-terminus of the alpha chain, which is derived from the carboxyl end of the proenzyme. The post-translation cleavage follows an unusual pathway, termed non-hydrolytic serinolysis, in which the side chain hydroxyl group of the serine supplies its oxygen atom to form the C-terminus of the beta chain, while the remainder of the serine residue undergoes an oxidative deamination to produce ammonia and the pyruvoyl group blocking the N-terminus of the alpha chain.

The enzyme catalyses L-arginine + H(+) = agmatine + CO2. It functions in the pathway amine and polyamine biosynthesis; agmatine biosynthesis; agmatine from L-arginine: step 1/1. Specifically catalyzes the decarboxylation of L-arginine to agmatine. Has no S-adenosylmethionine decarboxylase (AdoMetDC) activity. In Sulfolobus acidocaldarius (strain ATCC 33909 / DSM 639 / JCM 8929 / NBRC 15157 / NCIMB 11770), this protein is Arginine decarboxylase proenzyme.